A 919-amino-acid chain; its full sequence is TRPM8 channel-associated factor 2 (919 aa).

Residues 543-842 (DVWMSTGLYL…TYLQLQEVFG (300 aa)) form the Peptidase M60 domain.

Belongs to the TCAF family. As to quaternary structure, interacts with TRPM8 (via N-terminus and C-terminus domains); the interaction inhibits TRPM8 channel activity. Interacts with TRPV6.

The protein resides in the cell membrane. Negatively regulates the plasma membrane cation channel TRPM8 activity. Involved in the recruitment of TRPM8 to the cell surface. Promotes prostate cancer cell migration stimulation in a TRPM8-dependent manner. This chain is TRPM8 channel-associated factor 2, found in Mus musculus (Mouse).